We begin with the raw amino-acid sequence, 305 residues long: Glycine betaine-binding protein YehZ (305 aa).

The first 23 residues, 1–23 (MPLLKLWAGSLVMLAAVSLPLQA), serve as a signal peptide directing secretion.

This sequence belongs to the OsmX family. In terms of assembly, the complex is composed of two ATP-binding proteins (YehX), two transmembrane proteins (YehW and YehY) and a solute-binding protein (YehZ).

It localises to the periplasm. Its function is as follows. Part of an ABC transporter complex involved in low-affinity glycine betaine uptake. Binds glycine betaine with low affinity. This Escherichia coli (strain K12) protein is Glycine betaine-binding protein YehZ (yehZ).